We begin with the raw amino-acid sequence, 142 residues long: MQIKIKYLDETQTRINKMEQGDWIDLRAAEDVAIKKDEFKLVPLGVAMELPEGYEAHVVPRSSTYKNFGVIQTNSMGVIDESYKGDNDFWFFPAYALRDTKIKKGDRICQFRIMKKMPAVDLIEVDRLGNGDRGGHGSTGTK.

Residues S62 and N74 each contribute to the dUMP site. D80 serves as the catalytic Proton acceptor. The dUMP site is built by Y83 and F91.

This sequence belongs to the dUTPase family. Homotrimer. It depends on Mg(2+) as a cofactor.

The catalysed reaction is dUTP + H2O = dUMP + diphosphate + H(+). Its pathway is pyrimidine metabolism; dUMP biosynthesis; dUMP from dCTP (dUTP route): step 2/2. Involved in nucleotide metabolism: produces dUMP, the immediate precursor of thymidine nucleotides and decreases the intracellular concentration of dUTP, so that uracil cannot be incorporated into DNA. The Ser-62 side chain changes its position upon ligand-binding to make contacts with the nucleotide phosphates. The sequence is that of SPbeta prophage-derived deoxyuridine 5'-triphosphate nucleotidohydrolase YosS from Bacillus subtilis (strain 168).